A 1210-amino-acid chain; its full sequence is V-type proton ATPase 116 kDa subunit a 4 (1210 aa).

Residues 1 to 715 (MSSFSNVGFV…YTIITFPFLF (715 aa)) lie on the Cytoplasmic side of the membrane. The segment covering 259–271 (SSKISFTSSSPSP) has biased composition (low complexity). The tract at residues 259 to 292 (SSKISFTSSSPSPQRNPKNEAQKNSSSKREETSM) is disordered. The span at 275 to 291 (PKNEAQKNSSSKREETS) shows a compositional bias: basic and acidic residues. A coiled-coil region spans residues 339-405 (FVKQMRRCEE…EREFLDLNNN (67 aa)). The chain crosses the membrane as a helical span at residues 716–736 (AVMFGDAAHGAILLLAALFFI). At 737-760 (RNERKIESKKIRDEIFNTFYGGRY) the chain is on the extracellular side. The chain crosses the membrane as a helical span at residues 761 to 781 (IMMLMGIFSIYTGFLYNDAFA). The Cytoplasmic portion of the chain corresponds to 782–855 (KSFNVFGSGW…SFLNSMKMKA (74 aa)). Residues 856–876 (SVIIGITQMTFGVFLSVLNHI) traverse the membrane as a helical segment. At 877–892 (HFKSYIDIISNFIPQV) the chain is on the extracellular side. A helical membrane pass occupies residues 893-913 (IFLSCIFIYLCIQIIVKWIFF). The Cytoplasmic segment spans residues 914–976 (SVNAENVFGF…WYPNQRLVET (63 aa)). The helical transmembrane segment at 977 to 997 (ILISISLACIPIMLFGKPLWV) threads the bilayer. The Extracellular segment spans residues 998–1127 (RFVTSKRHKL…NETIAMCLKP (130 aa)). Residues Asn-1010, Asn-1019, and Asn-1118 are each glycosylated (N-linked (GlcNAc...) asparagine). The helical transmembrane segment at 1128 to 1148 (VVACVAFFIFASLSLSILIMM) threads the bilayer. Residues 1149–1210 (EGLSAFLHAL…DISSGQHLHI (62 aa)) are Cytoplasmic-facing.

The protein belongs to the V-ATPase 116 kDa subunit family. As to quaternary structure, V-ATPase is a heteromultimeric enzyme made up of two complexes: the ATP-hydrolytic V1 complex and the proton translocation V0 complex. The V1 complex consists of three catalytic AB heterodimers that form a heterohexamer, three peripheral stalks each consisting of EG heterodimers, one central rotor including subunits D and F, and the regulatory subunits C and H. The proton translocation complex V0 consists of the proton transport subunit a, a ring of proteolipid subunits c9c'', rotary subunit d, subunits e and f, and the accessory subunits vah-19/Ac45 and vah-20/PRR. Expressed in uterus.

It localises to the membrane. Subunit of the V0 complex of vacuolar(H+)-ATPase (V-ATPase), a multisubunit enzyme composed of a peripheral complex (V1) that hydrolyzes ATP and a membrane integral complex (V0) that translocates protons. V-ATPase is responsible for acidifying and maintaining the pH of intracellular compartments and in some cell types, is targeted to the plasma membrane, where it is responsible for acidifying the extracellular environment. This Caenorhabditis elegans protein is V-type proton ATPase 116 kDa subunit a 4.